An 88-amino-acid polypeptide reads, in one-letter code: Large ribosomal subunit protein bL27 (88 aa).

The segment at 1–21 (MAHKKGASSSRNGRDSAAQRL) is disordered.

It belongs to the bacterial ribosomal protein bL27 family.

The protein is Large ribosomal subunit protein bL27 of Mycobacterium sp. (strain MCS).